The chain runs to 359 residues: Protein Wnt-5a (359 aa).

Positions methionine 1–aspartate 20 are cleaved as a signal peptide. Cysteine 83 and cysteine 94 form a disulfide bridge. 2 N-linked (GlcNAc...) asparagine glycosylation sites follow: asparagine 93 and asparagine 99. 10 cysteine pairs are disulfide-bonded: cysteine 133-cysteine 141, cysteine 143-cysteine 161, cysteine 217-cysteine 231, cysteine 219-cysteine 226, cysteine 288-cysteine 319, cysteine 304-cysteine 314, cysteine 318-cysteine 358, cysteine 334-cysteine 349, cysteine 336-cysteine 346, and cysteine 341-cysteine 342. Residue serine 223 is the site of O-palmitoleoyl serine; by PORCN attachment. N-linked (GlcNAc...) asparagine glycosylation is found at asparagine 291 and asparagine 305.

Belongs to the Wnt family. Post-translationally, palmitoleoylation is required for efficient binding to frizzled receptors. Depalmitoleoylation leads to Wnt signaling pathway inhibition. In terms of tissue distribution, neuroectodermal and non-neuroectodermal tissues.

The protein localises to the secreted. It is found in the extracellular space. Its subcellular location is the extracellular matrix. Ligand for members of the frizzled family of seven transmembrane receptors. Can activate or inhibit canonical Wnt signaling, depending on receptor context. Required during embryogenesis for extension of the primary anterior-posterior axis. In Ambystoma mexicanum (Axolotl), this protein is Protein Wnt-5a (WNT-5A).